Here is a 339-residue protein sequence, read N- to C-terminus: Ketol-acid reductoisomerase (NADP(+)) (339 aa).

The 182-residue stretch at 1 to 182 (MRVYYDRDAD…GGGRAGVIET (182 aa)) folds into the KARI N-terminal Rossmann domain. NADP(+) contacts are provided by residues 24–27 (YGSQ), Arg-48, Ser-51, Thr-53, and 83–86 (DELQ). His-108 is an active-site residue. Position 134 (Gly-134) interacts with NADP(+). In terms of domain architecture, KARI C-terminal knotted spans 183–328 (TFKEECETDL…KKLRSMMPWI (146 aa)). Residues Asp-191, Glu-195, Glu-227, and Glu-231 each coordinate Mg(2+). Ser-252 serves as a coordination point for substrate.

It belongs to the ketol-acid reductoisomerase family. Mg(2+) is required as a cofactor.

The catalysed reaction is (2R)-2,3-dihydroxy-3-methylbutanoate + NADP(+) = (2S)-2-acetolactate + NADPH + H(+). It carries out the reaction (2R,3R)-2,3-dihydroxy-3-methylpentanoate + NADP(+) = (S)-2-ethyl-2-hydroxy-3-oxobutanoate + NADPH + H(+). The protein operates within amino-acid biosynthesis; L-isoleucine biosynthesis; L-isoleucine from 2-oxobutanoate: step 2/4. Its pathway is amino-acid biosynthesis; L-valine biosynthesis; L-valine from pyruvate: step 2/4. Functionally, involved in the biosynthesis of branched-chain amino acids (BCAA). Catalyzes an alkyl-migration followed by a ketol-acid reduction of (S)-2-acetolactate (S2AL) to yield (R)-2,3-dihydroxy-isovalerate. In the isomerase reaction, S2AL is rearranged via a Mg-dependent methyl migration to produce 3-hydroxy-3-methyl-2-ketobutyrate (HMKB). In the reductase reaction, this 2-ketoacid undergoes a metal-dependent reduction by NADPH to yield (R)-2,3-dihydroxy-isovalerate. This chain is Ketol-acid reductoisomerase (NADP(+)), found in Bartonella tribocorum (strain CIP 105476 / IBS 506).